Reading from the N-terminus, the 217-residue chain is Adenylate kinase (217 aa).

10-15 (GIGKGT) contributes to the ATP binding site. The NMP stretch occupies residues 30–59 (STGDIFRKNFKENTELGTLSKKFIAQGLLV). Residues Thr-31, Arg-36, 57–59 (LLV), 85–88 (GFPR), and Gln-92 contribute to the AMP site. The LID stretch occupies residues 126-163 (GRRICPECGKVYHIEKIPPKNPGICDKDQKTLIQREDD). Arg-127 provides a ligand contact to ATP. Zn(2+)-binding residues include Cys-130 and Cys-133. 136–137 (VY) contacts ATP. Zn(2+)-binding residues include Cys-150 and Asp-153. AMP is bound by residues Arg-160 and Arg-171. Gln-199 provides a ligand contact to ATP.

Belongs to the adenylate kinase family. In terms of assembly, monomer.

Its subcellular location is the cytoplasm. It catalyses the reaction AMP + ATP = 2 ADP. It participates in purine metabolism; AMP biosynthesis via salvage pathway; AMP from ADP: step 1/1. Functionally, catalyzes the reversible transfer of the terminal phosphate group between ATP and AMP. Plays an important role in cellular energy homeostasis and in adenine nucleotide metabolism. The protein is Adenylate kinase of Aster yellows witches'-broom phytoplasma (strain AYWB).